The chain runs to 48 residues: Small ribosomal subunit protein uS14 (48 aa).

The Zn(2+) site is built by Cys-13, Cys-16, Cys-31, and Cys-34.

The protein belongs to the universal ribosomal protein uS14 family. Zinc-binding uS14 subfamily. Part of the 30S ribosomal subunit. Zn(2+) serves as cofactor.

In terms of biological role, binds 16S rRNA, required for the assembly of 30S particles. This is Small ribosomal subunit protein uS14 from Methanopyrus kandleri (strain AV19 / DSM 6324 / JCM 9639 / NBRC 100938).